The following is a 1171-amino-acid chain: ATP-dependent helicase/deoxyribonuclease subunit B (1171 aa).

The region spanning 1–287 is the UvrD-like helicase ATP-binding domain; sequence MSLRFVIGRA…IPLMEQPRFH (287 aa). 8–15 provides a ligand contact to ATP; sequence GRAGSGKS. The UvrD-like helicase C-terminal domain occupies 281-587; sequence MEQPRFHSPA…QFANIPPSLD (307 aa). The [4Fe-4S] cluster site is built by cysteine 805, cysteine 1129, cysteine 1132, and cysteine 1138.

It belongs to the helicase family. AddB/RexB type 1 subfamily. In terms of assembly, heterodimer of AddA and AddB. Mg(2+) is required as a cofactor. Requires [4Fe-4S] cluster as cofactor.

Its function is as follows. The heterodimer acts as both an ATP-dependent DNA helicase and an ATP-dependent, dual-direction single-stranded exonuclease. Recognizes the chi site generating a DNA molecule suitable for the initiation of homologous recombination. The AddB subunit has 5' -&gt; 3' nuclease activity but not helicase activity. This Bacillus cereus (strain G9842) protein is ATP-dependent helicase/deoxyribonuclease subunit B.